The following is a 764-amino-acid chain: Nucleolar complex-associated protein 2 (764 aa).

A coiled-coil region spans residues 3–69 (AKDDKKRVKK…EEELKRLQEK (67 aa)). 4 disordered regions span residues 23–67 (ELNN…KRLQ), 89–113 (ATEI…EGDD), 627–646 (AVFG…DRME), and 651–726 (AFNS…EDDA). A compositionally biased stretch (basic and acidic residues) spans 30–41 (IDAHDIVMEQKS). A compositionally biased stretch (basic residues) spans 42–51 (DKKRGKKVKS). A compositionally biased stretch (basic and acidic residues) spans 52–67 (KKAEAEEHEEELKRLQ). The span at 90–113 (TEIEDDADVEPDTDLEDTEKEGDD) shows a compositional bias: acidic residues. Residues 661-672 (DSKEKEPEEEKT) show a composition bias toward basic and acidic residues. The short motif at 673 to 680 (KKKKRKRG) is the Nuclear localization signal 1 element. Positions 673 to 682 (KKKKRKRGGK) are enriched in basic residues. Over residues 693–726 (GLGEDDVVEDFVLSSDEEEEDLFDIGGDKDEDDA) the composition is skewed to acidic residues. The Nuclear localization signal 2 signature appears at 738–745 (SKKTKGTY).

It belongs to the NOC2 family. In terms of assembly, component of nucleolar complexes. Forms homodimers. Interacts with RBL and NOC3 in both the nucleolus and nucleoplasm. Binds to SWA2.

The protein localises to the nucleus. The protein resides in the nucleolus. It is found in the nucleoplasm. Its function is as follows. Together with SWA2, probably involved in pre-ribosome export from the nucleus to the cytoplasm. The chain is Nucleolar complex-associated protein 2 from Arabidopsis thaliana (Mouse-ear cress).